The following is a 476-amino-acid chain: Siroheme synthase (476 aa).

Positions 1-203 (MNYFPVFADL…RQIEAAKKEL (203 aa)) are precorrin-2 dehydrogenase /sirohydrochlorin ferrochelatase. Residues 22 to 23 (TI) and 43 to 44 (QK) each bind NAD(+). S128 bears the Phosphoserine mark. The uroporphyrinogen-III C-methyltransferase stretch occupies residues 214-476 (GSVSLVGAGP…LDSLRIERVA (263 aa)). P223 serves as a coordination point for S-adenosyl-L-methionine. The active-site Proton acceptor is D246. The active-site Proton donor is K268. Residues 299–301 (GGD), V304, 329–330 (TA), M381, and G410 contribute to the S-adenosyl-L-methionine site.

In the N-terminal section; belongs to the precorrin-2 dehydrogenase / sirohydrochlorin ferrochelatase family. It in the C-terminal section; belongs to the precorrin methyltransferase family.

The enzyme catalyses uroporphyrinogen III + 2 S-adenosyl-L-methionine = precorrin-2 + 2 S-adenosyl-L-homocysteine + H(+). It carries out the reaction precorrin-2 + NAD(+) = sirohydrochlorin + NADH + 2 H(+). The catalysed reaction is siroheme + 2 H(+) = sirohydrochlorin + Fe(2+). The protein operates within cofactor biosynthesis; adenosylcobalamin biosynthesis; precorrin-2 from uroporphyrinogen III: step 1/1. It participates in cofactor biosynthesis; adenosylcobalamin biosynthesis; sirohydrochlorin from precorrin-2: step 1/1. It functions in the pathway porphyrin-containing compound metabolism; siroheme biosynthesis; precorrin-2 from uroporphyrinogen III: step 1/1. Its pathway is porphyrin-containing compound metabolism; siroheme biosynthesis; siroheme from sirohydrochlorin: step 1/1. The protein operates within porphyrin-containing compound metabolism; siroheme biosynthesis; sirohydrochlorin from precorrin-2: step 1/1. Multifunctional enzyme that catalyzes the SAM-dependent methylations of uroporphyrinogen III at position C-2 and C-7 to form precorrin-2 via precorrin-1. Then it catalyzes the NAD-dependent ring dehydrogenation of precorrin-2 to yield sirohydrochlorin. Finally, it catalyzes the ferrochelation of sirohydrochlorin to yield siroheme. In Mannheimia succiniciproducens (strain KCTC 0769BP / MBEL55E), this protein is Siroheme synthase.